Consider the following 427-residue polypeptide: 3-phosphoshikimate 1-carboxyvinyltransferase (427 aa).

Positions 22, 23, and 27 each coordinate 3-phosphoshikimate. Lys22 serves as a coordination point for phosphoenolpyruvate. 2 residues coordinate phosphoenolpyruvate: Gly96 and Arg124. 3-phosphoshikimate contacts are provided by Ser169, Ser170, Gln171, Ser197, Asp313, Asn336, and Lys340. Position 171 (Gln171) interacts with phosphoenolpyruvate. The active-site Proton acceptor is the Asp313. Phosphoenolpyruvate-binding residues include Arg344, Arg386, and Lys411.

The protein belongs to the EPSP synthase family. As to quaternary structure, monomer.

The protein localises to the cytoplasm. The enzyme catalyses 3-phosphoshikimate + phosphoenolpyruvate = 5-O-(1-carboxyvinyl)-3-phosphoshikimate + phosphate. It functions in the pathway metabolic intermediate biosynthesis; chorismate biosynthesis; chorismate from D-erythrose 4-phosphate and phosphoenolpyruvate: step 6/7. Functionally, catalyzes the transfer of the enolpyruvyl moiety of phosphoenolpyruvate (PEP) to the 5-hydroxyl of shikimate-3-phosphate (S3P) to produce enolpyruvyl shikimate-3-phosphate and inorganic phosphate. The protein is 3-phosphoshikimate 1-carboxyvinyltransferase of Salmonella choleraesuis (strain SC-B67).